Here is a 122-residue protein sequence, read N- to C-terminus: Large ribosomal subunit protein uL22 (122 aa).

Positions 102–122 (VAEGKEMKSSKSHKKNQAEGK) are disordered.

The protein belongs to the universal ribosomal protein uL22 family. As to quaternary structure, part of the 50S ribosomal subunit.

Its function is as follows. This protein binds specifically to 23S rRNA; its binding is stimulated by other ribosomal proteins, e.g. L4, L17, and L20. It is important during the early stages of 50S assembly. It makes multiple contacts with different domains of the 23S rRNA in the assembled 50S subunit and ribosome. Functionally, the globular domain of the protein is located near the polypeptide exit tunnel on the outside of the subunit, while an extended beta-hairpin is found that lines the wall of the exit tunnel in the center of the 70S ribosome. The sequence is that of Large ribosomal subunit protein uL22 from Helicobacter pylori (strain ATCC 700392 / 26695) (Campylobacter pylori).